Reading from the N-terminus, the 389-residue chain is Curcumin synthase 1 (389 aa).

Cys-164 is an active-site residue.

The protein belongs to the thiolase-like superfamily. Chalcone/stilbene synthases family. As to quaternary structure, homodimer. Expressed in both the leaf and rhizome, with higher expression in the rhizome.

The enzyme catalyses (E)-feruloylacetyl-CoA + (E)-feruloyl-CoA + H2O = curcumin + CO2 + 2 CoA. It functions in the pathway secondary metabolite biosynthesis; flavonoid biosynthesis. Functionally, catalyzes the synthesis of curcumin by condensing feruloyl-CoA with a diketide-CoA in the curcuminoid biosynthesis. The protein is Curcumin synthase 1 (CURS1) of Curcuma longa (Turmeric).